A 502-amino-acid polypeptide reads, in one-letter code: 4,4'-diapophytoene desaturase (4,4'-diaponeurosporene-forming) (502 aa).

An FAD-binding site is contributed by 5-17 (VIGAGVTGLAAAA).

This sequence belongs to the carotenoid/retinoid oxidoreductase family. CrtN subfamily.

It catalyses the reaction 15-cis-4,4'-diapophytoene + 3 FAD + 3 H(+) = all-trans-4,4'-diaponeurosporene + 3 FADH2. Its pathway is carotenoid biosynthesis; staphyloxanthin biosynthesis; staphyloxanthin from farnesyl diphosphate: step 2/5. Involved in the biosynthesis of the yellow-orange carotenoid staphyloxanthin, which plays a role in the virulence via its protective function against oxidative stress. Catalyzes three successive dehydrogenation reactions that lead to the introduction of three double bonds into 4,4'-diapophytoene (dehydrosqualene), with 4,4'-diapophytofluene and 4,4'-diapo-zeta-carotene as intermediates, and 4,4'-diaponeurosporene (the major deep-yellow pigment in staphylococci strains) as the end product. The polypeptide is 4,4'-diapophytoene desaturase (4,4'-diaponeurosporene-forming) (Staphylococcus aureus (strain MRSA252)).